The chain runs to 460 residues: Oxysterols receptor LXR-beta (460 aa).

Residues 1-14 (MSSPTTSSLDTPLP) show a composition bias toward low complexity. The tract at residues 1-78 (MSSPTTSSLD…PERKRKKGPA (78 aa)) is disordered. The transactivation AF-1; required for ligand-independent transactivation function stretch occupies residues 1–85 (MSSPTTSSLD…GPAPKMLGHE (85 aa)). The span at 36-45 (EPWPGGPDPD) shows a compositional bias: pro residues. The nuclear receptor DNA-binding region spans 84–161 (HELCRVCGDK…AGMREQCVLS (78 aa)). 2 consecutive NR C4-type zinc fingers follow at residues 87–107 (CRVCGDKASGFHYNVLSCEGC) and 125–149 (CRGGGTCQMDAFMRRKCQQCRLRKC). The disordered stretch occupies residues 169 to 216 (KIRKQQQESQSQSQSPVGPQGSSSSASGPGASPGGSEAGSQGSGEGEG). The segment covering 175 to 198 (QESQSQSQSPVGPQGSSSSASGPG) has biased composition (low complexity). Over residues 199-215 (ASPGGSEAGSQGSGEGE) the composition is skewed to gly residues. Residues 219–460 (LTAAQELMIQ…LLSEIWDVHE (242 aa)) are transactivation AF-2; required for ligand-dependent transactivation function; mediates interaction with CCAR2. Positions 222 to 460 (AQELMIQQLV…LLSEIWDVHE (239 aa)) constitute an NR LBD domain. Residues K409 and K447 each participate in a glycyl lysine isopeptide (Lys-Gly) (interchain with G-Cter in SUMO2) cross-link.

Belongs to the nuclear hormone receptor family. NR1 subfamily. In terms of assembly, forms a heterodimer with RXR. Interacts with CCAR2 (via N-terminus) in a ligand-independent manner. Interacts (when sumoylated) with GPS2; interaction with GPS2 onto hepatic acute phase protein promoters prevents N-Cor corepressor complex dissociation. Interacts with ABCA12 and ABCA1; this interaction is required for ABCA1 localization to the cell surface and is necessary for its normal activity and stability. In terms of processing, sumoylated by SUMO2 at Lys-409 and Lys-447 during the hepatic acute phase response, leading to promote interaction with GPS2 and prevent N-Cor corepressor complex dissociation. As to expression, ubiquitous.

Its subcellular location is the nucleus. In terms of biological role, nuclear receptor that exhibits a ligand-dependent transcriptional activation activity. Binds preferentially to double-stranded oligonucleotide direct repeats having the consensus half-site sequence 5'-AGGTCA-3' and 4-nt spacing (DR-4). Regulates cholesterol uptake through MYLIP-dependent ubiquitination of LDLR, VLDLR and LRP8; DLDLR and LRP8. Interplays functionally with RORA for the regulation of genes involved in liver metabolism. Induces LPCAT3-dependent phospholipid remodeling in endoplasmic reticulum (ER) membranes of hepatocytes, driving SREBF1 processing and lipogenesis. Via LPCAT3, triggers the incorporation of arachidonate into phosphatidylcholines of ER membranes, increasing membrane dynamics and enabling triacylglycerols transfer to nascent very low-density lipoprotein (VLDL) particles. Via LPCAT3 also counteracts lipid-induced ER stress response and inflammation, likely by modulating SRC kinase membrane compartmentalization and limiting the synthesis of lipid inflammatory mediators. Plays an anti-inflammatory role during the hepatic acute phase response by acting as a corepressor: inhibits the hepatic acute phase response by preventing dissociation of the N-Cor corepressor complex. This chain is Oxysterols receptor LXR-beta (NR1H2), found in Homo sapiens (Human).